A 120-amino-acid chain; its full sequence is NAD(P)H-quinone oxidoreductase subunit 3, chloroplastic (120 aa).

Transmembrane regions (helical) follow at residues 9 to 29 (IFWAFLMISSVIPILAFLISG), 64 to 84 (MFALVFVVFDVETVFLYPWAM), and 88 to 108 (VLGVSAFIEALIFVLIPIVGS).

It belongs to the complex I subunit 3 family. In terms of assembly, NDH is composed of at least 16 different subunits, 5 of which are encoded in the nucleus.

It is found in the plastid. It localises to the chloroplast thylakoid membrane. The catalysed reaction is a plastoquinone + NADH + (n+1) H(+)(in) = a plastoquinol + NAD(+) + n H(+)(out). The enzyme catalyses a plastoquinone + NADPH + (n+1) H(+)(in) = a plastoquinol + NADP(+) + n H(+)(out). Its function is as follows. NDH shuttles electrons from NAD(P)H:plastoquinone, via FMN and iron-sulfur (Fe-S) centers, to quinones in the photosynthetic chain and possibly in a chloroplast respiratory chain. The immediate electron acceptor for the enzyme in this species is believed to be plastoquinone. Couples the redox reaction to proton translocation, and thus conserves the redox energy in a proton gradient. In Illicium oligandrum (Star anise), this protein is NAD(P)H-quinone oxidoreductase subunit 3, chloroplastic.